We begin with the raw amino-acid sequence, 122 residues long: Urease subunit beta (122 aa).

Belongs to the urease beta subunit family. Heterotrimer of UreA (gamma), UreB (beta) and UreC (alpha) subunits. Three heterotrimers associate to form the active enzyme.

The protein localises to the cytoplasm. The catalysed reaction is urea + 2 H2O + H(+) = hydrogencarbonate + 2 NH4(+). The protein operates within nitrogen metabolism; urea degradation; CO(2) and NH(3) from urea (urease route): step 1/1. This is Urease subunit beta from Lysinibacillus sphaericus (strain C3-41).